Consider the following 612-residue polypeptide: Chloride intracellular channel protein 6 (612 aa).

Residues 1-373 are disordered; it reads MAEATEPKEV…NGPASEEGDL (373 aa). The segment covering 34–51 has biased composition (basic and acidic residues); the sequence is LEGREASEGAAEAPRDLG. Ser40 is subject to Phosphoserine. Low complexity predominate over residues 84–96; the sequence is PGTETPGTSGAPG. Over residues 120–129 the composition is skewed to polar residues; that stretch reads QQVQGTSSGL. Basic and acidic residues predominate over residues 140–153; sequence EDARREPEDPKASE. The span at 208-223 shows a compositional bias: low complexity; sequence SSPQPQDEAIEIAAAE. Basic and acidic residues-rich tracts occupy residues 240–264 and 275–303; these read AKGEGETLRKDGFEEAAPEEARVDS and EEARVDSGENRDQGRLQEETGEEEARPES. Phosphoserine occurs at positions 264, 303, and 321. Composition is skewed to basic and acidic residues over residues 325-335 and 354-364; these read EEAKSTGHEES and ELGRVNGRREN. Phosphoserine is present on Ser368. The G-site motif lies at 395-398; that stretch reads CPFS. A helical transmembrane segment spans residues 397–417; sequence FSQRLFMILWLKGVIFNVTTV. The GST C-terminal domain maps to 441 to 612; it reads DGEVKTDVNK…AYSDAAKRMK (172 aa).

Belongs to the chloride channel CLIC family. Monomer (soluble state). Interacts with dopamine receptors DRD2, DRD3 and DRD4. In terms of processing, phosphorylated. Predominantly expressed in brain, pituitary and stomach. In adult brain, it is restricted to the choroid plexus, the striatal proliferative subventricular zone and the cerebellum where it colocalizes with the D(3)R in the Purkinje cells of the lobules IX and X.

It localises to the cytoplasm. The protein localises to the cell membrane. The catalysed reaction is chloride(in) = chloride(out). Its activity is regulated as follows. Channel activity is redox- and pH-regulated. Inhibited by IAA-94. Its function is as follows. In the soluble state, catalyzes glutaredoxin-like thiol disulfide exchange reactions with reduced glutathione as electron donor. Can insert into membranes and form voltage-dependent chloride-selective channels. The channel opens upon membrane depolarization at positive voltages and closes at negative membrane voltages. May play a critical role in water-secreting cells, possibly through the regulation of chloride ion transport. This is Chloride intracellular channel protein 6 (Clic6) from Rattus norvegicus (Rat).